Here is a 165-residue protein sequence, read N- to C-terminus: Lipoprotein signal peptidase (165 aa).

5 helical membrane passes run 10-30, 42-62, 71-91, 105-125, and 133-153; these read LKWL…KYWV, VLPG…GLFT, LFVW…YKLI, IGGA…VDFI, and HWPT…IVTI. Active-site residues include aspartate 123 and aspartate 141.

The protein belongs to the peptidase A8 family.

It localises to the cell inner membrane. It carries out the reaction Release of signal peptides from bacterial membrane prolipoproteins. Hydrolyzes -Xaa-Yaa-Zaa-|-(S,diacylglyceryl)Cys-, in which Xaa is hydrophobic (preferably Leu), and Yaa (Ala or Ser) and Zaa (Gly or Ala) have small, neutral side chains.. It participates in protein modification; lipoprotein biosynthesis (signal peptide cleavage). Functionally, this protein specifically catalyzes the removal of signal peptides from prolipoproteins. This chain is Lipoprotein signal peptidase, found in Blochmanniella pennsylvanica (strain BPEN).